Reading from the N-terminus, the 520-residue chain is Mitogen-activated protein kinase kinase 3 (520 aa).

At Ser-69 the chain carries Phosphoserine. The Protein kinase domain maps to 83–339; sequence MRVFGAIGSG…ADQLLSHPFI (257 aa). Residues 89-97 and Lys-112 each bind ATP; that span reads IGSGASSVV. The active-site Proton acceptor is Asp-207. Phosphoserine is present on Ser-235. Thr-241 and Thr-245 each carry phosphothreonine. In terms of domain architecture, NTF2 spans 366–516; that stretch reads LADMLTIHYY…YFLAKQELYI (151 aa).

Belongs to the protein kinase superfamily. STE Ser/Thr protein kinase family. MAP kinase kinase subfamily. In terms of assembly, interacts with MPK1, MPK2 and MPK7. Interacts with P.syringae type III effector HopF2. Interacts with MPK14. Binds to MAPKKK17 and MAPKKK18. Binds to MAPKKK20. In terms of processing, phosphorylation at Ser-235 and Thr-241 by MAP kinase kinase kinases positively regulates kinase activity. Phosphorylated by MAPKKK20. Mostly expressed in leaves, and, to a lower extent, in roots, seedlings, flower buds, flowers and siliques.

It localises to the nucleus. The protein resides in the cytoplasm. The catalysed reaction is L-seryl-[protein] + ATP = O-phospho-L-seryl-[protein] + ADP + H(+). It carries out the reaction L-threonyl-[protein] + ATP = O-phospho-L-threonyl-[protein] + ADP + H(+). It catalyses the reaction L-tyrosyl-[protein] + ATP = O-phospho-L-tyrosyl-[protein] + ADP + H(+). In terms of biological role, MKK3-MPK6 module plays an important role in the jasmonate signal transduction pathway through the negative regulation of MYC2/JIN1 expression. Activates by phosphorylation the downstream MPK6, MPK7 and MPK8. MKK3-MPK7 module acts as a positive regulator of PR1 gene expression. MKK3-MPK8 module negatively regulates ROS accumulation through controlling expression of the RBOHD gene. Component of the abscisic acid (ABA) signaling pathway that may act as ABA signal transducer in the context of abiotic stresses. Activator of the C group MAP kinases. Activates MPK7 in response to ABA. Mitogen-activated protein kinase (MAPK) that is specifically regulated by MAPKKK20 and mediates signaling that regulates cortical microtubule functions. This chain is Mitogen-activated protein kinase kinase 3, found in Arabidopsis thaliana (Mouse-ear cress).